We begin with the raw amino-acid sequence, 914 residues long: Solute carrier family 12 member 9 (914 aa).

Residues 1-36 (MASENSPLLAYRLLGEEGAAFPPNGAGGSGVASARK) are Cytoplasmic-facing. Ser6 carries the phosphoserine modification. Residues 37 to 57 (LSTFLGVVVPTVLSMFSIVVF) form a helical membrane-spanning segment. Residues 58 to 72 (LRIGFVVGHAGLLQA) lie on the Extracellular side of the membrane. Residues 73-93 (LAMLLVAYVILALTVLSVCAI) traverse the membrane as a helical segment. Topologically, residues 94 to 119 (ATNGAVRGGGAYFMISRTLGPEVGGS) are cytoplasmic. Residues 120-140 (IGLMFYLANVCGCAVSLLGLV) form a helical membrane-spanning segment. The Extracellular segment spans residues 141-167 (ESILDVFGADVTGSSGIKVLPQGYGWN). Residues 168 to 188 (LLYGSLLLGLVGGVCALGAGL) traverse the membrane as a helical segment. Residues 189 to 193 (YARAS) lie on the Cytoplasmic side of the membrane. Residues 194–214 (FLTFLLVSGSLASVLVSFVAV) form a helical membrane-spanning segment. Over 215 to 262 (GPRNITLAPRPGTNGSSVPPRHGHFTGFNGSTLKDNLGAGYAEDYTTG) the chain is Extracellular. Residues Asn218, Asn228, and Asn243 are each glycosylated (N-linked (GlcNAc...) asparagine). The helical transmembrane segment at 263–283 (AMMTFASVFAVLFNGCTGIMA) threads the bilayer. The Cytoplasmic segment spans residues 284 to 297 (GANMSGELKDPSRA). Residues 298 to 318 (IPLGTIIAVAYTFFIYILLFF) form a helical membrane-spanning segment. Topologically, residues 319–338 (LSSFTCDRALLQGDYGFFRD) are extracellular. Residues 339-359 (ISLWPPLVLIGIYATALSASM) form a helical membrane-spanning segment. Topologically, residues 360 to 376 (SSLIGASRILHALAQDD) are cytoplasmic. Residues 377 to 399 (LFGVILAPAKVVSGGGNPWGAVL) traverse the membrane as a helical segment. At 400-416 (YSWGLVQLVLLAGKLNT) the chain is on the extracellular side. Residues 417–437 (LAAVVTVFYLVAYAAVDLSCL) traverse the membrane as a helical segment. The Cytoplasmic segment spans residues 438-466 (SLEWASAPNFRPTFSLFSWHTCLLGVASC). The helical transmembrane segment at 467 to 487 (LLMMFLISPGAAGGSLLLMGL) threads the bilayer. Over 488 to 740 (LSALLTARGG…LLRPRGGPGY (253 aa)) the chain is Extracellular. A disordered region spans residues 645-678 (PAFSEPAEGTREGGSPALSTLFPPPRAPGSPRAL). Residues 741–761 (VDVCGLFLLQMATILSMVPAW) traverse the membrane as a helical segment. The Cytoplasmic portion of the chain corresponds to 762-914 (HSARLRIFLC…GVTPVTCTDL (153 aa)). The disordered stretch occupies residues 843–864 (QQGRGTGGGPGGPEGRDGEEGP). Residues 846–855 (RGTGGGPGGP) show a composition bias toward gly residues.

Belongs to the SLC12A transporter family. In terms of assembly, interacts with SLC12A1.

It is found in the cell membrane. The protein localises to the lysosome membrane. In terms of biological role, may be an inhibitor of SLC12A1. Seems to correspond to a subunit of a multimeric transport system and thus, additional subunits may be required for its function. May play a role in lysosomal ion flux and osmoregulation. The polypeptide is Solute carrier family 12 member 9 (Slc12a9) (Rattus norvegicus (Rat)).